A 172-amino-acid chain; its full sequence is Crossover junction endodeoxyribonuclease RuvC (172 aa).

Active-site residues include aspartate 7, glutamate 68, and aspartate 141. The Mg(2+) site is built by aspartate 7, glutamate 68, and aspartate 141.

It belongs to the RuvC family. Homodimer which binds Holliday junction (HJ) DNA. The HJ becomes 2-fold symmetrical on binding to RuvC with unstacked arms; it has a different conformation from HJ DNA in complex with RuvA. In the full resolvosome a probable DNA-RuvA(4)-RuvB(12)-RuvC(2) complex forms which resolves the HJ. Mg(2+) is required as a cofactor.

Its subcellular location is the cytoplasm. The enzyme catalyses Endonucleolytic cleavage at a junction such as a reciprocal single-stranded crossover between two homologous DNA duplexes (Holliday junction).. In terms of biological role, the RuvA-RuvB-RuvC complex processes Holliday junction (HJ) DNA during genetic recombination and DNA repair. Endonuclease that resolves HJ intermediates. Cleaves cruciform DNA by making single-stranded nicks across the HJ at symmetrical positions within the homologous arms, yielding a 5'-phosphate and a 3'-hydroxyl group; requires a central core of homology in the junction. The consensus cleavage sequence is 5'-(A/T)TT(C/G)-3'. Cleavage occurs on the 3'-side of the TT dinucleotide at the point of strand exchange. HJ branch migration catalyzed by RuvA-RuvB allows RuvC to scan DNA until it finds its consensus sequence, where it cleaves and resolves the cruciform DNA. In Frankia casuarinae (strain DSM 45818 / CECT 9043 / HFP020203 / CcI3), this protein is Crossover junction endodeoxyribonuclease RuvC.